We begin with the raw amino-acid sequence, 183 residues long: Large ribosomal subunit protein uL6 (183 aa).

This sequence belongs to the universal ribosomal protein uL6 family. In terms of assembly, part of the 50S ribosomal subunit.

This protein binds to the 23S rRNA, and is important in its secondary structure. It is located near the subunit interface in the base of the L7/L12 stalk, and near the tRNA binding site of the peptidyltransferase center. The chain is Large ribosomal subunit protein uL6 from Chlamydia trachomatis serovar L2 (strain ATCC VR-902B / DSM 19102 / 434/Bu).